The following is a 197-amino-acid chain: MDSEFFQPVYPRHYGECLSPVSTPSFFSTHMYTILIAIVVLVIIIIVLIYLFSSRKKKAAAAIEEEDIQFINPYQDQQWVEVTPQPGTSKPAGATTASVGKPVTGRPATNRPVTDRPATNNPVTDRLVMATGGPAAVSAAASAAASAAASAAASAPAHPAEPYTTVTTQNTASQTMSAIENLRQRSTYTHKDLENSL.

The helical transmembrane segment at 32–52 (YTILIAIVVLVIIIIVLIYLF) threads the bilayer. The segment at 84-123 (PQPGTSKPAGATTASVGKPVTGRPATNRPVTDRPATNNPV) is disordered. 4 repeat units span residues 139 to 142 (AAAS), 143 to 146 (AAAS), 147 to 150 (AAAS), and 151 to 154 (AAAS). A 4 X 4 AA tandem repeats of A-A-A-S region spans residues 139-154 (AAASAAASAAASAAAS). Residues 163–175 (YTTVTTQNTASQT) form an interaction with host DYNLL1 region.

Belongs to the asfivirus envelope protein p54 family. Interacts with the host light chain cytoplasmic dynein DYNLL1; this interaction is critical for intracellular microtubule-dependent virus transport toward viral factories.

The protein resides in the virion membrane. Its subcellular location is the host cytoplasm. The protein localises to the host cytoskeleton. It is found in the host endoplasmic reticulum membrane. Inner envelope protein involved, through its interaction with host dynein, in the intracellular microtubule-dependent transport of viral capsid toward viral factories. Seems to induce caspase-3 activation and apoptosis. Plays a role in virion morphogenesis by recruiting and transforming the host ER membranes into the precursors of the viral envelope. Involved in virus attachment to the host cell. The protein is Inner membrane protein p54 of African swine fever virus (isolate Tick/South Africa/Pretoriuskop Pr4/1996) (ASFV).